We begin with the raw amino-acid sequence, 355 residues long: 3-dehydroquinate synthase (355 aa).

NAD(+) is bound by residues 71–76 (EGEASK), 105–109 (GVVGD), 129–130 (TS), Lys142, and Lys151. Zn(2+)-binding residues include Glu184, His246, and His263.

This sequence belongs to the sugar phosphate cyclases superfamily. Dehydroquinate synthase family. Co(2+) serves as cofactor. It depends on Zn(2+) as a cofactor. The cofactor is NAD(+).

It is found in the cytoplasm. The catalysed reaction is 7-phospho-2-dehydro-3-deoxy-D-arabino-heptonate = 3-dehydroquinate + phosphate. The protein operates within metabolic intermediate biosynthesis; chorismate biosynthesis; chorismate from D-erythrose 4-phosphate and phosphoenolpyruvate: step 2/7. Functionally, catalyzes the conversion of 3-deoxy-D-arabino-heptulosonate 7-phosphate (DAHP) to dehydroquinate (DHQ). The chain is 3-dehydroquinate synthase from Streptococcus gordonii (strain Challis / ATCC 35105 / BCRC 15272 / CH1 / DL1 / V288).